A 162-amino-acid chain; its full sequence is Glycine cleavage system H protein, mitochondrial (162 aa).

A mitochondrion-targeting transit peptide spans M1–F31. Residues V53–K135 enclose the Lipoyl-binding domain. Residue K94 is modified to N6-lipoyllysine.

It belongs to the GcvH family. In terms of assembly, the glycine cleavage system is composed of four proteins: P, T, L and H. It depends on (R)-lipoate as a cofactor.

It localises to the mitochondrion. Functionally, the glycine cleavage system catalyzes the degradation of glycine. The H protein shuttles the methylamine group of glycine from the P protein to the T protein. The protein is Glycine cleavage system H protein, mitochondrial (GDCSH) of Flaveria pringlei.